The chain runs to 188 residues: Ribosome maturation factor RimM (188 aa).

A PRC barrel domain is found at glutamate 98 to leucine 174. Positions aspartate 169–serine 188 are disordered. The span at proline 179–serine 188 shows a compositional bias: acidic residues.

Belongs to the RimM family. As to quaternary structure, binds ribosomal protein uS19.

It is found in the cytoplasm. In terms of biological role, an accessory protein needed during the final step in the assembly of 30S ribosomal subunit, possibly for assembly of the head region. Essential for efficient processing of 16S rRNA. May be needed both before and after RbfA during the maturation of 16S rRNA. It has affinity for free ribosomal 30S subunits but not for 70S ribosomes. The protein is Ribosome maturation factor RimM of Deinococcus radiodurans (strain ATCC 13939 / DSM 20539 / JCM 16871 / CCUG 27074 / LMG 4051 / NBRC 15346 / NCIMB 9279 / VKM B-1422 / R1).